Reading from the N-terminus, the 3354-residue chain is Cadherin-23 (3354 aa).

Positions 1–23 (MGRHVATSCHVAWLLVLISGCWG) are cleaved as a signal peptide. The Extracellular segment spans residues 24 to 3064 (QVNRLPFFTN…SVRLPDDMSA (3041 aa)). Cadherin domains are found at residues 34–132 (HFFD…APTF), 133–236 (HNQP…DPIF), 237–348 (INLP…APEF), 349–460 (NSSE…RPIF), 461–561 (SQPL…VPTF), 562–671 (QKDA…PPTF), 672–784 (SKPA…APYY), 779–890 (KDAP…DPTF), 891–995 (QNLP…TPTF), 996–1102 (FPAV…RPIF), 1103–1208 (LQSS…APVF), 1210–1313 (QQQY…AVQF), 1314–1418 (SNAS…SPRF), 1420–1527 (FTSD…PPVI), 1529–1634 (SPFG…APMF), 1635–1744 (QQPH…VPTF), 1745–1851 (PRDY…DPVL), 1852–1959 (LNLP…HPLF), 1960–2069 (TKST…RPTF), 2070–2174 (SPAT…RPEF), 2175–2293 (LNPI…TPQF), 2297–2402 (GITY…NPIF), 2403–2509 (DQPS…RPQF), 2510–2611 (SKPQ…RPVF), 2614–2722 (PPNG…EPLF), 2729–2846 (SPQY…PPRF), and 2847–2975 (TKAE…EEEF). N-linked (GlcNAc...) asparagine glycosylation is found at asparagine 155 and asparagine 206. Asparagine 349, asparagine 393, asparagine 434, asparagine 466, asparagine 472, asparagine 652, asparagine 694, asparagine 765, asparagine 810, asparagine 827, asparagine 941, asparagine 1001, asparagine 1018, asparagine 1171, asparagine 1282, asparagine 1315, asparagine 1473, asparagine 1534, asparagine 1651, asparagine 1667, asparagine 1818, asparagine 1857, asparagine 1889, asparagine 1902, asparagine 2013, asparagine 2050, asparagine 2129, asparagine 2168, asparagine 2195, asparagine 2263, asparagine 2357, and asparagine 2369 each carry an N-linked (GlcNAc...) asparagine glycan. Asparagine 2616, asparagine 2749, asparagine 2808, asparagine 2877, asparagine 2896, asparagine 2941, and asparagine 2981 each carry an N-linked (GlcNAc...) asparagine glycan. The chain crosses the membrane as a helical span at residues 3065–3085 (LQMAIIVLAILLFLAAMLFVL). Topologically, residues 3086–3354 (MNWYYRTVHK…METPLEITEL (269 aa)) are cytoplasmic.

In terms of assembly, antiparallel heterodimer with PCDH15. Interacts with USH1C and USH1G. Particularly strong expression in the retina. Found also in the cochlea.

The protein localises to the cell membrane. Its function is as follows. Cadherins are calcium-dependent cell adhesion proteins. They preferentially interact with themselves in a homophilic manner in connecting cells. CDH23 is required for establishing and/or maintaining the proper organization of the stereocilia bundle of hair cells in the cochlea and the vestibule during late embryonic/early postnatal development. It is part of the functional network formed by USH1C, USH1G, CDH23 and MYO7A that mediates mechanotransduction in cochlear hair cells. Required for normal hearing. In Homo sapiens (Human), this protein is Cadherin-23.